The following is a 148-amino-acid chain: Lipoprotein signal peptidase (148 aa).

A run of 2 helical transmembrane segments spans residues 57-77 (VLLVLVTLLIMIGVIYYFIKY) and 88-105 (VSFIVSGALGNLYDRIFY). Active-site residues include aspartate 110 and aspartate 129. Residues 124–144 (TFNIADILVVVGTIMLAIFLL) traverse the membrane as a helical segment.

Belongs to the peptidase A8 family.

It is found in the cell membrane. It catalyses the reaction Release of signal peptides from bacterial membrane prolipoproteins. Hydrolyzes -Xaa-Yaa-Zaa-|-(S,diacylglyceryl)Cys-, in which Xaa is hydrophobic (preferably Leu), and Yaa (Ala or Ser) and Zaa (Gly or Ala) have small, neutral side chains.. It functions in the pathway protein modification; lipoprotein biosynthesis (signal peptide cleavage). In terms of biological role, this protein specifically catalyzes the removal of signal peptides from prolipoproteins. This is Lipoprotein signal peptidase from Clostridium novyi (strain NT).